We begin with the raw amino-acid sequence, 86 residues long: Small ribosomal subunit protein bS20 (86 aa).

Belongs to the bacterial ribosomal protein bS20 family.

In terms of biological role, binds directly to 16S ribosomal RNA. The polypeptide is Small ribosomal subunit protein bS20 (Exiguobacterium sibiricum (strain DSM 17290 / CCUG 55495 / CIP 109462 / JCM 13490 / 255-15)).